The chain runs to 179 residues: Large ribosomal subunit protein uL15 (179 aa).

It belongs to the universal ribosomal protein uL15 family. As to quaternary structure, part of the 50S ribosomal subunit.

Its function is as follows. Binds to the 23S rRNA. In Archaeoglobus fulgidus (strain ATCC 49558 / DSM 4304 / JCM 9628 / NBRC 100126 / VC-16), this protein is Large ribosomal subunit protein uL15.